Here is a 994-residue protein sequence, read N- to C-terminus: Sarcoplasmic/endoplasmic reticulum calcium ATPase 1 (994 aa).

Topologically, residues 1–48 are cytoplasmic; it reads MEQAHTKTTEECLAYFGVNENTGLSLDQVKKNFDKFGPNELPAEEGKS. A helical transmembrane segment spans residues 49 to 69; that stretch reads LWELVAEQFEDLLVRILLLAA. The Lumenal segment spans residues 70-89; sequence IISFVLAWFEEGEETVTAFV. The helical transmembrane segment at 90 to 110 threads the bilayer; sequence EPFVILLILIANAVVGVWQER. Residues 111-253 are Cytoplasmic-facing; the sequence is NAEDAIEALK…QEKTPLQQKL (143 aa). Residues 254–273 form a helical membrane-spanning segment; that stretch reads DEFGEQLSKVISLICVAVWL. Residues 274 to 295 lie on the Lumenal side of the membrane; that stretch reads INIGHFNDPIHGGSWIKGAIYY. The chain crosses the membrane as a helical span at residues 296–313; sequence FKIAVALAVAAIPEGLPA. Positions 304, 305, 307, and 309 each coordinate Ca(2+). At 314 to 757 the chain is on the cytoplasmic side; sequence VITTCLALGT…EEGRAIYNNM (444 aa). Asp-351 serves as the catalytic 4-aspartylphosphate intermediate. Mg(2+) is bound by residues Asp-351 and Thr-353. ATP is bound by residues Thr-353, Glu-442, Arg-489, Lys-515, Arg-560, Thr-625, Gly-626, Asp-627, Arg-678, and Lys-684. Asp-703 lines the Mg(2+) pocket. Asn-706 provides a ligand contact to ATP. A helical transmembrane segment spans residues 758-777; that stretch reads KQFIRYLISSNVGEVVCIFL. Residues Asn-768 and Glu-771 each coordinate Ca(2+). Residues 778–787 lie on the Lumenal side of the membrane; the sequence is TAALGLPEAL. Residues 788–808 form a helical membrane-spanning segment; the sequence is IPVQLLWVNLVTDGLPATALG. Residues 788-808 are interaction with PLN; that stretch reads IPVQLLWVNLVTDGLPATALG. Asn-796, Thr-799, and Asp-800 together coordinate Ca(2+). Residues 809-828 are Cytoplasmic-facing; the sequence is FNPPDLDIMDRPPRSPKEPL. The helical transmembrane segment at 829–851 threads the bilayer; that stretch reads ISGWLFFRYMAIGGYVGAATVGA. Residues 852 to 897 are Lumenal-facing; that stretch reads AAWWFMYADDGPNVTFYQLSHFMQCTEDNPDFEGHECEIFESPVPM. The cysteines at positions 876 and 888 are disulfide-linked. A helical transmembrane segment spans residues 898–917; the sequence is TMALSVLVTIEMCNALNSLS. Residue Glu-908 participates in Ca(2+) binding. At 918-930 the chain is on the cytoplasmic side; that stretch reads ENQSLIRMPPWSN. The helical transmembrane segment at 931 to 949 threads the bilayer; that stretch reads FWLLGSICLSMSLHFLILY. Residues 932–943 form an interaction with PLN region; it reads WLLGSICLSMSL. Residues 950 to 964 lie on the Lumenal side of the membrane; the sequence is VEPLPMIFKLTPLNV. Residues 965-985 traverse the membrane as a helical segment; that stretch reads EQWFIVLKMSFPVILLDELLK. The Cytoplasmic segment spans residues 986–994; that stretch reads FVARNYLEG.

Belongs to the cation transport ATPase (P-type) (TC 3.A.3) family. Type IIA subfamily. As to quaternary structure, interacts with sarcolipin (SLN). Interacts with phospholamban (PLN). Interacts with myoregulin (MRLN). Interacts with DWORF. Interacts with VMP1. Mg(2+) is required as a cofactor.

It localises to the endoplasmic reticulum membrane. It is found in the sarcoplasmic reticulum membrane. It catalyses the reaction Ca(2+)(in) + ATP + H2O = Ca(2+)(out) + ADP + phosphate + H(+). With respect to regulation, inhibited by sarcolipin (SLN) and myoregulin (MRLN). Also shown to be inhibited by phospholamban (PLN) in vitro. Enhanced by DWORF; DWORF increases activity by displacing sarcolipin (SLN), phospholamban (PLN) and myoregulin (MRLN). In terms of biological role, key regulator of striated muscle performance by acting as the major Ca(2+) ATPase responsible for the reuptake of cytosolic Ca(2+) into the sarcoplasmic reticulum. Catalyzes the hydrolysis of ATP coupled with the translocation of calcium from the cytosol to the sarcoplasmic reticulum lumen. Contributes to calcium sequestration involved in muscular excitation/contraction. The polypeptide is Sarcoplasmic/endoplasmic reticulum calcium ATPase 1 (ATP2A1) (Pelophylax lessonae (Pool frog)).